We begin with the raw amino-acid sequence, 185 residues long: Prenylated Rab acceptor protein 1 (185 aa).

The Cytoplasmic segment spans residues 1–78 (MAAQKDQQKD…RNVEYYQSNY (78 aa)). The segment at 30–54 (AGREWLERRRATIRPWGTFVDQQRF) is required for interaction with prenylated RAB3A and VAMP2. The next 2 helical transmembrane spans lie at 79-94 (VFVFLGLILYCVVTSP) and 95-112 (MLLVALAVFFGACYILYL). The Cytoplasmic portion of the chain corresponds to 113–131 (RTLQSKLVLFGREVSPAHQ). Transmembrane regions (helical) follow at residues 132-148 (YALAGGVSFPFFWLAGA) and 149-165 (GSAVFWVLGATLVLIGS). Residues 165-185 (SHAAFHQIEPADGEELQMEPV) form a required for interaction with GDI1 region. Topologically, residues 166–185 (HAAFHQIEPADGEELQMEPV) are cytoplasmic. Positions 175 to 185 (ADGEELQMEPV) are required for interaction with prenylated RAB3A and VAMP2. The homodimerization stretch occupies residues 175-185 (ADGEELQMEPV).

Belongs to the PRA1 family. In terms of assembly, homodimers. Interacts specifically with both prenylated Rab proteins (including RAB3A and RAB1), and VAMP2 (synaptobrevin-2), in an exclusive way. Interacts with NDRG1. Interacts with free GDI1 in the absence of Rab proteins. Also interacts with PCLO. Ubiquitous.

Its subcellular location is the cell membrane. It localises to the cytoplasm. The protein localises to the golgi apparatus. The protein resides in the cytoplasmic vesicle. It is found in the secretory vesicle. Its subcellular location is the synaptic vesicle. In terms of biological role, general Rab protein regulator required for vesicle formation from the Golgi complex. May control vesicle docking and fusion by mediating the action of Rab GTPases to the SNARE complexes. In addition it inhibits the removal of Rab GTPases from the membrane by GDI1. The polypeptide is Prenylated Rab acceptor protein 1 (Rabac1) (Rattus norvegicus (Rat)).